A 313-amino-acid polypeptide reads, in one-letter code: MIEIKVGSRESELARWQARWVIQALEKAWPGLSCRLVTLKTKGDKILDVALARIGDKGLFTKELELALLDGAIDLAVHSMKDMPTTLPEGLVIGAIGPREDPADVLVSPEGYTLATLPIKARVGTSSLRRKAQLAYARPDLELVDLRGNVPTRLAKMERDGLTAIVLAAAGLKRLNHGQVLGEPIPYHICLPAVGQGAIGVEIRAGDRRVAELVAAINHPPTAAAVRAERAYLRALEGGCQVPIAALATVEDTALVLQGMVASLDGREMLRDIASGSTRDPEAAGRELARKLLARGAGEILQEVKAQSGKYQG.

Cysteine 240 is subject to S-(dipyrrolylmethanemethyl)cysteine.

This sequence belongs to the HMBS family. As to quaternary structure, monomer. Requires dipyrromethane as cofactor.

It catalyses the reaction 4 porphobilinogen + H2O = hydroxymethylbilane + 4 NH4(+). It participates in porphyrin-containing compound metabolism; protoporphyrin-IX biosynthesis; coproporphyrinogen-III from 5-aminolevulinate: step 2/4. Its function is as follows. Tetrapolymerization of the monopyrrole PBG into the hydroxymethylbilane pre-uroporphyrinogen in several discrete steps. This is Porphobilinogen deaminase from Moorella thermoacetica (strain ATCC 39073 / JCM 9320).